The sequence spans 116 residues: Class I hydrophobin 1 (116 aa).

An N-terminal signal peptide occupies residues 1–19; it reads MLFKQAILVATTLTDLAVA. 4 disulfide bridges follow: cysteine 35–cysteine 95, cysteine 42–cysteine 89, cysteine 43–cysteine 76, and cysteine 96–cysteine 109. N-linked (GlcNAc...) asparagine glycans are attached at residues asparagine 44 and asparagine 100.

Belongs to the fungal hydrophobin family. In terms of assembly, self-assembles to form functional amyloid fibrils called rodlets. Self-assembly into fibrillar rodlets occurs spontaneously at hydrophobic:hydrophilic interfaces and the rodlets further associate laterally to form amphipathic monolayers.

The protein resides in the secreted. It localises to the cell wall. Functionally, aerial growth, conidiation, and dispersal of filamentous fungi in the environment rely upon a capability of their secreting small amphipathic proteins called hydrophobins (HPBs) with low sequence identity. Class I can self-assemble into an outermost layer of rodlet bundles on aerial cell surfaces, conferring cellular hydrophobicity that supports fungal growth, development and dispersal; whereas Class II form highly ordered films at water-air interfaces through intermolecular interactions but contribute nothing to the rodlet structure. This chain is Class I hydrophobin 1, found in Pleurotus ostreatus (Oyster mushroom).